Consider the following 887-residue polypeptide: Translation initiation factor IF-2 (887 aa).

The segment at 1–291 is disordered; sequence MTDQADTSER…RRRVERERKK (291 aa). Over residues 58 to 117 the composition is skewed to low complexity; sequence AAPAAAPAAAPAAAEEVAKKPVAAPEVKPAAPVEERPAPVAKAAPEVKAVPAPAPAAAPA. Composition is skewed to basic and acidic residues over residues 148–178, 185–194, 201–215, and 267–276; these read SARE…EAER, AAEEASRHTA, RAAE…DDRP, and AFDDESERQR. A tr-type G domain is found at 385–553; that stretch reads ARAPVVTVMG…TILLQAELLD (169 aa). The interval 394–401 is G1; sequence GHVDHGKT. Position 394–401 (394–401) interacts with GTP; sequence GHVDHGKT. The G2 stretch occupies residues 419-423; that stretch reads GITQH. The interval 441–444 is G3; it reads DTPG. GTP-binding positions include 441–445 and 495–498; these read DTPGH and NKMD. A G4 region spans residues 495 to 498; that stretch reads NKMD. Positions 531–533 are G5; that stretch reads SAK.

The protein belongs to the TRAFAC class translation factor GTPase superfamily. Classic translation factor GTPase family. IF-2 subfamily.

The protein localises to the cytoplasm. Functionally, one of the essential components for the initiation of protein synthesis. Protects formylmethionyl-tRNA from spontaneous hydrolysis and promotes its binding to the 30S ribosomal subunits. Also involved in the hydrolysis of GTP during the formation of the 70S ribosomal complex. In Parvibaculum lavamentivorans (strain DS-1 / DSM 13023 / NCIMB 13966), this protein is Translation initiation factor IF-2.